Consider the following 123-residue polypeptide: Large ribosomal subunit protein bL12 (123 aa).

This sequence belongs to the bacterial ribosomal protein bL12 family. Homodimer. Part of the ribosomal stalk of the 50S ribosomal subunit. Forms a multimeric L10(L12)X complex, where L10 forms an elongated spine to which 2 to 4 L12 dimers bind in a sequential fashion. Binds GTP-bound translation factors.

Functionally, forms part of the ribosomal stalk which helps the ribosome interact with GTP-bound translation factors. Is thus essential for accurate translation. This chain is Large ribosomal subunit protein bL12, found in Aliarcobacter butzleri (strain RM4018) (Arcobacter butzleri).